The chain runs to 29 residues: Trypsin inhibitor 1 (29 aa).

3 disulfide bridges follow: Cys3–Cys20, Cys10–Cys22, and Cys16–Cys28.

Belongs to the protease inhibitor I7 (squash-type serine protease inhibitor) family.

It is found in the secreted. In terms of biological role, inhibits trypsin. This chain is Trypsin inhibitor 1, found in Momordica repens.